Consider the following 589-residue polypeptide: Serine/threonine-protein phosphatase 2A 65 kDa regulatory subunit A alpha isoform (589 aa).

An N-acetylalanine modification is found at A2. 15 HEAT repeats span residues 8-46 (DSLY…GVER), 47-84 (TRSE…GGPE), 85-123 (YVHC…SPSD), 124-161 (LEAH…VSSA), 162-200 (VKAE…ELDN), 201-239 (VKSE…PQED), 240-278 (LEAL…GPEI), 279-321 (TKTD…RENV), 322-360 (IMSQ…GKDN), 361-399 (TIEH…GIRQ), 400-438 (LSQS…GVEF), 439-477 (FDEK…GKEW), 478-516 (AHAT…GQDI), 517-555 (TTKH…DNST), and 556-589 (LQSE…LSLA). The interval 8-399 (DSLYPIAVLI…CVNEVIGIRQ (392 aa)) is PP2A subunit B binding. A polyoma small and medium T antigens Binding region spans residues 47-321 (TRSELLPFLT…NLSADCRENV (275 aa)). An SV40 small T antigen binding region spans residues 85–239 (YVHCLLPPLE…NIAQLLPQED (155 aa)). K280 is modified (N6-acetyllysine). The segment at 400-589 (LSQSLLPAIV…QEALTVLSLA (190 aa)) is PP2A subunit C binding.

The protein belongs to the phosphatase 2A regulatory subunit A family. PP2A consists of a common heterodimeric core enzyme, composed of PPP2CA a 36 kDa catalytic subunit (subunit C) and PPP2R1A a 65 kDa constant regulatory subunit (PR65 or subunit A), that associates with a variety of regulatory subunits. Proteins that associate with the core dimer include three families of regulatory subunits B (the R2/B/PR55/B55, R3/B''/PR72/PR130/PR59 and R5/B'/B56 families), the 48 kDa variable regulatory subunit, viral proteins, and cell signaling molecules. Found in a complex with at least ARL2, PPP2CB, PPP2R1A, PPP2R2A, PPP2R5E and TBCD. Interacts with the PP2A C catalytic subunit PPP2CA. Interacts with the PP2A B subunit PPP2R2A. Interacts with the PP2A B subunit PPP2R5D. Interacts with FOXO1; the interaction dephosphorylates FOXO1 on AKT-mediated phosphorylation sites. Interacts with IPO9. Interacts with TP53 and SGO1. Interacts with PLA2G16; this interaction might decrease PP2A activity. Interacts with CTTNBP2NL. Interacts with GNA12; the interaction promotes protein phosphatase 2A activation causing dephosphorylation of MAPT. Interacts with CIP2A; this interaction stabilizes CIP2A. Interacts with PABIR1/FAM122A. Interacts with ADCY8; antagonizes interaction between ADCY8 and calmodulin. Interacts with CRTC3 (when phosphorylated at 'Ser-391'). Interacts with SPRY2. Part of the core of STRIPAK complexes composed of PP2A catalytic and scaffolding subunits, the striatins (PP2A regulatory subunits), the striatin-associated proteins MOB4, STRIP1 and STRIP2, PDCD10 and members of the STE20 kinases, such as STK24 and STK26. Component of the Integrator-PP2A (INTAC) complex, composed of the Integrator core complex and protein phosphatase 2A subunits PPP2CA and PPP2R1A. In terms of assembly, (Microbial infection) Interacts with JC virus small t antigen; this interaction inhibits PPP2R1A activity.

It localises to the cytoplasm. It is found in the nucleus. The protein resides in the chromosome. Its subcellular location is the centromere. The protein localises to the lateral cell membrane. It localises to the cell projection. It is found in the dendrite. Functionally, the PR65 subunit of protein phosphatase 2A serves as a scaffolding molecule to coordinate the assembly of the catalytic subunit and a variable regulatory B subunit. Upon interaction with GNA12 promotes dephosphorylation of microtubule associated protein TAU/MAPT. Required for proper chromosome segregation and for centromeric localization of SGO1 in mitosis. Together with RACK1 adapter, mediates dephosphorylation of AKT1 at 'Ser-473', preventing AKT1 activation and AKT-mTOR signaling pathway. Dephosphorylation of AKT1 is essential for regulatory T-cells (Treg) homeostasis and stability. Part of the striatin-interacting phosphatase and kinase (STRIPAK) complexes. STRIPAK complexes have critical roles in protein (de)phosphorylation and are regulators of multiple signaling pathways including Hippo, MAPK, nuclear receptor and cytoskeleton remodeling. Different types of STRIPAK complexes are involved in a variety of biological processes such as cell growth, differentiation, apoptosis, metabolism and immune regulation. Key mediator of a quality checkpoint during transcription elongation as part of the Integrator-PP2A (INTAC) complex. The INTAC complex drives premature transcription termination of transcripts that are unfavorably configured for transcriptional elongation: within the INTAC complex, acts as a scaffolding subunit for PPP2CA, which catalyzes dephosphorylation of the C-terminal domain (CTD) of Pol II subunit POLR2A/RPB1 and SUPT5H/SPT5, thereby preventing transcriptional elongation. Regulates the recruitment of the SKA complex to kinetochores. The sequence is that of Serine/threonine-protein phosphatase 2A 65 kDa regulatory subunit A alpha isoform from Homo sapiens (Human).